A 147-amino-acid polypeptide reads, in one-letter code: MASHRLLLLCLAGLVFVSEAGPTGAGESKCPLMVKVLDAVRGSPAVNVAVNVFKRAADETWEPFASGKTSESGELHGLTTEEEFVEGIYKVEIDTKSYWKALGISPFHEHAEVVFAANDSGPRRYTIAALLSPYSYSTTAVVTNPKE.

The first 20 residues, Met1–Ala20, serve as a signal peptide directing secretion. Cys30 bears the Sulfocysteine mark. Position 35 (Lys35) interacts with L-thyroxine. Glu62 carries the 4-carboxyglutamate modification. Ser72 carries the post-translational modification Phosphoserine. Residue Glu74 participates in L-thyroxine binding. Asn118 is a glycosylation site (N-linked (GlcNAc...) asparagine). Ser137 contributes to the L-thyroxine binding site.

The protein belongs to the transthyretin family. As to quaternary structure, homotetramer. Dimer of dimers. In the homotetramer, subunits assemble around a central channel that can accommodate two ligand molecules. Interacts with RBP4. In terms of processing, sulfonation of the reactive cysteine Cys-30 enhances the stability of the native conformation of TTR, avoiding misassembly of the protein leading to amyloid formation. Detected in liver.

The protein localises to the secreted. Thyroid hormone-binding protein. Probably transports thyroxine from the bloodstream to the brain. The protein is Transthyretin (TTR) of Pongo abelii (Sumatran orangutan).